Here is a 420-residue protein sequence, read N- to C-terminus: Exodeoxyribonuclease 7 large subunit (420 aa).

Belongs to the XseA family. As to quaternary structure, heterooligomer composed of large and small subunits.

The protein localises to the cytoplasm. It carries out the reaction Exonucleolytic cleavage in either 5'- to 3'- or 3'- to 5'-direction to yield nucleoside 5'-phosphates.. Bidirectionally degrades single-stranded DNA into large acid-insoluble oligonucleotides, which are then degraded further into small acid-soluble oligonucleotides. In Helicobacter pylori (strain J99 / ATCC 700824) (Campylobacter pylori J99), this protein is Exodeoxyribonuclease 7 large subunit.